An 826-amino-acid polypeptide reads, in one-letter code: Ubiquitin carboxyl-terminal hydrolase 16 (826 aa).

The UBP-type zinc finger occupies 22–142; the sequence is PVCRHIRKGL…QVVDYVRKQA (121 aa). Zn(2+) is bound by residues cysteine 24, histidine 26, cysteine 48, cysteine 51, cysteine 74, cysteine 77, cysteine 82, histidine 90, histidine 94, histidine 103, cysteine 116, and cysteine 119. Lysine 140 is covalently cross-linked (Glycyl lysine isopeptide (Lys-Gly) (interchain with G-Cter in SUMO2)). Positions 144-189 are disordered; it reads NTTPESAEDNGNIELENKKLEKESKNEQEREKKENMARENPSMNST. Residues 158-180 show a composition bias toward basic and acidic residues; sequence LENKKLEKESKNEQEREKKENMA. Phosphoserine is present on serine 188. A USP domain is found at 195–825; that stretch reads KGLSNLGNTC…QAYLLFYERI (631 aa). Cysteine 204 functions as the Nucleophile in the catalytic mechanism. The span at 393-407 shows a compositional bias: basic and acidic residues; that stretch reads SGKKSINDKNLKKTM. The interval 393–458 is disordered; the sequence is SGKKSINDKN…QAKNQRRQQK (66 aa). Residues 408 to 419 show a composition bias toward acidic residues; it reads EDEDKDSEEEKD. Serine 414 is modified (phosphoserine). Residues 420 to 429 are compositionally biased toward basic and acidic residues; it reads NDSYLKERND. Positions 437–457 are enriched in basic residues; it reads HLQKKAKKQAKKQAKNQRRQQ. Residues serine 530 and serine 551 each carry the phosphoserine modification. Histidine 760 functions as the Proton acceptor in the catalytic mechanism.

The protein belongs to the peptidase C19 family. USP16 subfamily. In terms of assembly, homotetramer. Associates with late pre-40S ribosomes. Interacts with CEP78; promoting deubiquitination of tektins. Post-translationally, phosphorylated at the onset of mitosis and dephosphorylated during the metaphase/anaphase transition. Phosphorylation by AURKB enhances the deubiquitinase activity.

The protein localises to the nucleus. The catalysed reaction is Thiol-dependent hydrolysis of ester, thioester, amide, peptide and isopeptide bonds formed by the C-terminal Gly of ubiquitin (a 76-residue protein attached to proteins as an intracellular targeting signal).. Functionally, specifically deubiquitinates 'Lys-120' of histone H2A (H2AK119Ub), a specific tag for epigenetic transcriptional repression, thereby acting as a coactivator. Deubiquitination of histone H2A is a prerequisite for subsequent phosphorylation at 'Ser-11' of histone H3 (H3S10ph), and is required for chromosome segregation when cells enter into mitosis. In resting B- and T-lymphocytes, phosphorylation by AURKB leads to enhance its activity, thereby maintaining transcription in resting lymphocytes. Regulates Hox gene expression via histone H2A deubiquitination. Prefers nucleosomal substrates. Does not deubiquitinate histone H2B. Also deubiquitinates non-histone proteins, such as ribosomal protein RPS27A: deubiquitination of monoubiquitinated RPS27A promotes maturation of the 40S ribosomal subunit. Also mediates deubiquitination of tektin proteins (TEKT1, TEKT2, TEK3, TEKT4 and TEKT5), promoting their stability. The chain is Ubiquitin carboxyl-terminal hydrolase 16 from Bos taurus (Bovine).